We begin with the raw amino-acid sequence, 78 residues long: Large ribosomal subunit protein bL28 (78 aa).

This sequence belongs to the bacterial ribosomal protein bL28 family.

This is Large ribosomal subunit protein bL28 from Prochlorococcus marinus (strain SARG / CCMP1375 / SS120).